Consider the following 164-residue polypeptide: Cell cycle link protein (164 aa).

A binding to host SKP1 protein region spans residues 9 to 22 (LPEELKEKIMNEHL). The LXCXE motif, interaction with host RBR motif lies at 111 to 115 (LYCSE).

The protein belongs to the nanovirus Clink protein family. In terms of assembly, interacts with host SKP1. Interacts (via LXCXE domain) with host retinoblastoma-related protein 1 (RBR1). Interacts (via LXCXE domain) with retinoblastoma-related proteins (RBR).

In terms of biological role, interacts with and disrupts the function of host retinoblastoma-related proteins RBR, which are key regulators of the cell cycle. Induces transcriptional activation of E2F-regulated S-phase and G2/M-phase-specific genes. Inactivation of the ability of RBR to arrest the cell cycle leads to the stimulation of viral DNA replication. The protein is Cell cycle link protein (DNA-C) of Trifolium subterraneum (Subterranean clover).